The following is a 317-amino-acid chain: Thymidylate synthase (317 aa).

DUMP contacts are provided by residues arginine 40 and 167–168 (RR). Cysteine 187 acts as the Nucleophile in catalysis. DUMP is bound by residues 216–219 (RSCD), asparagine 227, and 257–259 (HVY). Aspartate 219 contacts (6R)-5,10-methylene-5,6,7,8-tetrahydrofolate.

It belongs to the thymidylate synthase family. In terms of assembly, homodimer.

It catalyses the reaction dUMP + (6R)-5,10-methylene-5,6,7,8-tetrahydrofolate = 7,8-dihydrofolate + dTMP. It functions in the pathway pyrimidine metabolism; dTTP biosynthesis. This chain is Thymidylate synthase (TMP1), found in Cryptococcus neoformans var. neoformans serotype D (strain B-3501A) (Filobasidiella neoformans).